The following is a 478-amino-acid chain: Serine hydroxymethyltransferase, cytosolic (478 aa).

K251 bears the N6-(pyridoxal phosphate)lysine mark.

This sequence belongs to the SHMT family. In terms of assembly, homotetramer. Identified in complex with FAM175B and the other subunits of the BRISC complex, at least composed of FAM175B/ABRO1, BRCC3/BRCC36, BABAM2 and BABAM1/NBA1. Pyridoxal 5'-phosphate serves as cofactor.

Its subcellular location is the cytoplasm. The enzyme catalyses (6R)-5,10-methylene-5,6,7,8-tetrahydrofolate + glycine + H2O = (6S)-5,6,7,8-tetrahydrofolate + L-serine. It functions in the pathway one-carbon metabolism; tetrahydrofolate interconversion. Functionally, interconversion of serine and glycine. The protein is Serine hydroxymethyltransferase, cytosolic (Shmt1) of Mus musculus (Mouse).